Here is a 401-residue protein sequence, read N- to C-terminus: Elongation factor Tu (401 aa).

The tr-type G domain occupies 10 to 211 (KPHLNVGTIG…ALDTFVPNPK (202 aa)). A G1 region spans residues 19-26 (GHVDHGKT). 19 to 26 (GHVDHGKT) provides a ligand contact to GTP. Residue Thr-26 participates in Mg(2+) binding. The G2 stretch occupies residues 62 to 66 (GITIA). Residues 83–86 (DCPG) are G3. Residues 83 to 87 (DCPGH) and 138 to 141 (NKAD) each bind GTP. Residues 138-141 (NKAD) are G4. Positions 179 to 181 (SAV) are G5.

This sequence belongs to the TRAFAC class translation factor GTPase superfamily. Classic translation factor GTPase family. EF-Tu/EF-1A subfamily. As to quaternary structure, monomer.

The protein localises to the cytoplasm. It catalyses the reaction GTP + H2O = GDP + phosphate + H(+). GTP hydrolase that promotes the GTP-dependent binding of aminoacyl-tRNA to the A-site of ribosomes during protein biosynthesis. The polypeptide is Elongation factor Tu (Leptospira interrogans serogroup Icterohaemorrhagiae serovar copenhageni (strain Fiocruz L1-130)).